The sequence spans 512 residues: Ribose import ATP-binding protein RbsA 2 (512 aa).

2 consecutive ABC transporter domains span residues 7 to 242 (LEIR…VGRE) and 257 to 498 (LGEP…SGIG). Residue 39–46 (GENGAGKS) participates in ATP binding.

The protein belongs to the ABC transporter superfamily. Ribose importer (TC 3.A.1.2.1) family. The complex is composed of an ATP-binding protein (RbsA), two transmembrane proteins (RbsC) and a solute-binding protein (RbsB).

It is found in the cell inner membrane. It carries out the reaction D-ribose(out) + ATP + H2O = D-ribose(in) + ADP + phosphate + H(+). Functionally, part of the ABC transporter complex RbsABC involved in ribose import. Responsible for energy coupling to the transport system. The sequence is that of Ribose import ATP-binding protein RbsA 2 from Rhizobium meliloti (strain 1021) (Ensifer meliloti).